The following is a 551-amino-acid chain: Eukaryotic translation initiation factor 3 subunit D-2 (551 aa).

Residues 105-152 (NNVRARGRTGRGSQAVGGPGGPAAGGSTANSTKYGKGRNTRNTQNVGR) are disordered. A compositionally biased stretch (gly residues) spans 119–128 (AVGGPGGPAA). The interval 290-304 (QFDLLTVNETSLEPP) is RNA gate.

It belongs to the eIF-3 subunit D family. Component of the eukaryotic translation initiation factor 3 (eIF-3) complex. The eIF-3 complex interacts with pix.

The protein resides in the cytoplasm. MRNA cap-binding component of the eukaryotic translation initiation factor 3 (eIF-3) complex, which is involved in protein synthesis of a specialized repertoire of mRNAs and, together with other initiation factors, stimulates binding of mRNA and methionyl-tRNAi to the 40S ribosome. The eIF-3 complex specifically targets and initiates translation of a subset of mRNAs involved in cell proliferation. In the eIF-3 complex, eif3d specifically recognizes and binds the 7-methylguanosine cap of a subset of mRNAs. This chain is Eukaryotic translation initiation factor 3 subunit D-2, found in Drosophila erecta (Fruit fly).